The primary structure comprises 145 residues: MHLIRAAGAVCLAVVLIAGCRFNEDQHQAEGENTAVTQLKSVPYSNFSLRVSYGDGEHNRYEGIYTKNGTQEKAEIQDKLSGVNQEGEEALDEMKMILSELSVTDQMAETEVIHSVLAAFNLDSHYDHIDLKLKLKDGSIREIKK.

The N-terminal stretch at Met1–Ala29 is a signal peptide. Residues Lys67 to Leu101 adopt a coiled-coil conformation.

This is an uncharacterized protein from Bacillus subtilis (strain 168).